The following is a 136-amino-acid chain: Protein NrdI (136 aa).

It belongs to the NrdI family.

Probably involved in ribonucleotide reductase function. This Salmonella paratyphi B (strain ATCC BAA-1250 / SPB7) protein is Protein NrdI.